Reading from the N-terminus, the 318-residue chain is Phosphoenolpyruvate transferase (318 aa).

Asp50 contacts 7,8-didemethyl-8-hydroxy-5-deazariboflavin.

It belongs to the CofD family. As to quaternary structure, homodimer. Mg(2+) serves as cofactor.

It carries out the reaction enolpyruvoyl-2-diphospho-5'-guanosine + 7,8-didemethyl-8-hydroxy-5-deazariboflavin = dehydro coenzyme F420-0 + GMP + H(+). Its pathway is cofactor biosynthesis; coenzyme F420 biosynthesis. Catalyzes the transfer of the phosphoenolpyruvate moiety from enoylpyruvoyl-2-diphospho-5'-guanosine (EPPG) to 7,8-didemethyl-8-hydroxy-5-deazariboflavin (FO) with the formation of dehydro coenzyme F420-0 and GMP. The sequence is that of Phosphoenolpyruvate transferase from Streptomyces griseus subsp. griseus (strain JCM 4626 / CBS 651.72 / NBRC 13350 / KCC S-0626 / ISP 5235).